We begin with the raw amino-acid sequence, 393 residues long: tRNA(Met) cytidine acetate ligase (393 aa).

The ATP site is built by G81, N142, and R167.

This sequence belongs to the TmcAL family.

Its subcellular location is the cytoplasm. It carries out the reaction cytidine(34) in elongator tRNA(Met) + acetate + ATP = N(4)-acetylcytidine(34) in elongator tRNA(Met) + AMP + diphosphate. Catalyzes the formation of N(4)-acetylcytidine (ac(4)C) at the wobble position of elongator tRNA(Met), using acetate and ATP as substrates. First activates an acetate ion to form acetyladenylate (Ac-AMP) and then transfers the acetyl group to tRNA to form ac(4)C34. In Bacillus mycoides (strain KBAB4) (Bacillus weihenstephanensis), this protein is tRNA(Met) cytidine acetate ligase.